The following is a 247-amino-acid chain: Ubiquinone biosynthesis O-methyltransferase (247 aa).

S-adenosyl-L-methionine contacts are provided by Arg45, Gly65, Asp86, and Leu130.

Belongs to the methyltransferase superfamily. UbiG/COQ3 family.

The catalysed reaction is a 3-demethylubiquinol + S-adenosyl-L-methionine = a ubiquinol + S-adenosyl-L-homocysteine + H(+). It carries out the reaction a 3-(all-trans-polyprenyl)benzene-1,2-diol + S-adenosyl-L-methionine = a 2-methoxy-6-(all-trans-polyprenyl)phenol + S-adenosyl-L-homocysteine + H(+). It participates in cofactor biosynthesis; ubiquinone biosynthesis. Its function is as follows. O-methyltransferase that catalyzes the 2 O-methylation steps in the ubiquinone biosynthetic pathway. The sequence is that of Ubiquinone biosynthesis O-methyltransferase from Alkalilimnicola ehrlichii (strain ATCC BAA-1101 / DSM 17681 / MLHE-1).